Here is a 501-residue protein sequence, read N- to C-terminus: L-ornithine N(5)-monooxygenase (501 aa).

Low complexity predominate over residues 1–16 (MNGTSTTGNGFTNGTN). The disordered stretch occupies residues 1–40 (MNGTSTTGNGFTNGTNYPVPKLELQPETTSTSPTRAQTHP). The segment covering 26–37 (PETTSTSPTRAQ) has biased composition (polar residues). FAD contacts are provided by residues 92-100 (EKQSNFAWH) and Gln-111. Lys-116 is a binding site for substrate. Residue Val-177 coordinates FAD. Position 263–266 (263–266 (SGQS)) interacts with NADP(+). Residues 304 to 307 (NELF) and Asn-334 contribute to the substrate site. Residue 334 to 336 (NYS) coordinates NADP(+). 476–478 (SLL) provides a ligand contact to FAD. Residue Ser-479 coordinates substrate.

This sequence belongs to the lysine N(6)-hydroxylase/L-ornithine N(5)-oxygenase family. In terms of assembly, homotetramer. It depends on FAD as a cofactor.

The catalysed reaction is L-ornithine + NADPH + O2 = N(5)-hydroxy-L-ornithine + NADP(+) + H2O. It catalyses the reaction L-ornithine + NADH + O2 = N(5)-hydroxy-L-ornithine + NAD(+) + H2O. The protein operates within siderophore biosynthesis. In terms of biological role, L-ornithine N(5)-monooxygenase; part of the siderophore biosynthetic pathway. Arthroderma benhamiae produces 2 types of extracellular siderophores, ferrichrome C and ferricrocin. The biosynthesis of these siderophores depends on the hydroxylation of ornithine to N(5)-hydroxyornithine, catalyzed by the monooxygenase sidA. The structure of ferricrocin differs from ferrichrome C only by a serine for alanine substitution and the assembly of both siderophores is suggested to be performed by the nonribosomal peptide synthase (NRPS) sidC. In Arthroderma benhamiae (strain ATCC MYA-4681 / CBS 112371) (Trichophyton mentagrophytes), this protein is L-ornithine N(5)-monooxygenase.